We begin with the raw amino-acid sequence, 187 residues long: UPF0301 protein YqgE (187 aa).

This sequence belongs to the UPF0301 (AlgH) family.

This Shigella boydii serotype 4 (strain Sb227) protein is UPF0301 protein YqgE.